Reading from the N-terminus, the 371-residue chain is MKINYQELANNIKLWAKELGFQKVGICDVDLSQHEAALEQWLEAGYHGSMDWMARHGVMRARPDELHPGTIRVISARMDYLPPKAGFASNLKDPNQAYISRYALGRDYHKLIRNQLKKLGQKIEEEVEQLGYRPFVDSAPILERPLAEKAGLGWTGKHSLLLDKNAGSWFFLGELLVDIPLPVDTPVENQCGKCTACISSCPTNAILENGVIDARRCISYLTIENSGIIPEEFRSLMGNRIYGCDDCQLVCPWNREAEITQQADFHRRSSLGNSDLISLFSWDESTFLKNMEGSAIRRIGHIQWLRNLSIAMGNAPHSEAIISALQDRLGLDENLDIHIQWAIKQQSLVITSNRKEQRLIRIIEKGLPRDA.

The Proton donor role is filled by aspartate 137. The 4Fe-4S ferredoxin-type domain occupies 179–211 (IPLPVDTPVENQCGKCTACISSCPTNAILENGV). [4Fe-4S] cluster is bound by residues cysteine 191, cysteine 194, cysteine 197, cysteine 201, cysteine 217, cysteine 244, cysteine 247, and cysteine 251.

It belongs to the QueG family. In terms of assembly, monomer. Requires cob(II)alamin as cofactor. [4Fe-4S] cluster is required as a cofactor.

It is found in the cytoplasm. The catalysed reaction is epoxyqueuosine(34) in tRNA + AH2 = queuosine(34) in tRNA + A + H2O. The protein operates within tRNA modification; tRNA-queuosine biosynthesis. In terms of biological role, catalyzes the conversion of epoxyqueuosine (oQ) to queuosine (Q), which is a hypermodified base found in the wobble positions of tRNA(Asp), tRNA(Asn), tRNA(His) and tRNA(Tyr). The chain is Epoxyqueuosine reductase from Aliivibrio fischeri (strain ATCC 700601 / ES114) (Vibrio fischeri).